Consider the following 347-residue polypeptide: Homeobox protein knotted-1-like 9 (347 aa).

The segment covering 1-17 has biased composition (low complexity); it reads MESFASLAGGGSSSTTA. Disordered regions lie at residues 1–36, 122–145, and 179–206; these read MESF…PPPL, QQLD…DVPD, and DSNC…DPSD. Residues 22–36 show a composition bias toward pro residues; it reads LIPPENPDRISPPPL. Positions 188 to 203 are enriched in acidic residues; sequence SEEEQDTSCPEAEEID. Residues 208 to 228 form the ELK domain; the sequence is QLKHQLLMKYGGSLGDLRQAF. The segment at residues 229 to 293 is a DNA-binding region (homeobox; TALE-type); it reads SKRTKKGKLP…NQRKRHWKPT (65 aa).

It belongs to the TALE/KNOX homeobox family.

The protein resides in the nucleus. In Oryza sativa subsp. japonica (Rice), this protein is Homeobox protein knotted-1-like 9.